A 211-amino-acid polypeptide reads, in one-letter code: Protein-L-isoaspartate O-methyltransferase (211 aa).

S62 is an active-site residue.

It belongs to the methyltransferase superfamily. L-isoaspartyl/D-aspartyl protein methyltransferase family.

It localises to the cytoplasm. The catalysed reaction is [protein]-L-isoaspartate + S-adenosyl-L-methionine = [protein]-L-isoaspartate alpha-methyl ester + S-adenosyl-L-homocysteine. Functionally, catalyzes the methyl esterification of L-isoaspartyl residues in peptides and proteins that result from spontaneous decomposition of normal L-aspartyl and L-asparaginyl residues. It plays a role in the repair and/or degradation of damaged proteins. The chain is Protein-L-isoaspartate O-methyltransferase from Shewanella woodyi (strain ATCC 51908 / MS32).